Here is a 596-residue protein sequence, read N- to C-terminus: MWLQAICIYTVFIIIGCGIPTAAEEHSLWRWTCENNRCTKIRNEPENKEPVLSLEACKMFCDDYGLLWPKPTIETNLGNFLSKINMNTIDIQITKQGKSDDLLTAAADRFKTLVSSSVPKGFSAKAAGKSVTVYLVNENPYIREFSLDMDESYELYISSTSSDKVNATIRGNSFFGVRNGLETLSQLIVYDDIRNNLLIVRDVTIKDRPVYPYRGILLDTARNFYSIDSIKRTIDAMAAVKLNTFHWHITDSQSFPLVLQKRPNLSKLGAYSPTKVYTKQDIREVVEYGLERGVRVLPEFDAPAHVGEGWQDTGLTVCFKAEPWTKFCVEPPCGQLNPTKEELYDYLEDIYVEMAEAFESTDMFHMGGDEVSERCWNSSEEIQNFMIQNRWNLDKSSFLKLWNYFQKNAQDRAYKAFGKRLPLILWTSTLTDYTHVEKFLDKDEYIIQVWTTGADPQIQGLLQKGYRLIMSNYDALYFDCGFGAWVGSGNNWCSPYIGGQKVYGNSPAVMALSYRDQILGGEVALWSEQSDPATLDGRLWPRAAAFAERMWAEPSTAWQDAEHRMLHVRERLVRMGIQAESLEPEWCYQNQGLCYG.

An N-terminal signal peptide occupies residues 1 to 23; the sequence is MWLQAICIYTVFIIIGCGIPTAA. N-linked (GlcNAc...) asparagine glycosylation is found at Asn166, Asn264, and Asn377.

It belongs to the glycosyl hydrolase 20 family.

The enzyme catalyses Hydrolysis of terminal non-reducing N-acetyl-D-hexosamine residues in N-acetyl-beta-D-hexosaminides.. Its function is as follows. Active during metamorphosis to degrade chitin. The chain is Chitooligosaccharidolytic beta-N-acetylglucosaminidase from Bombyx mori (Silk moth).